The sequence spans 151 residues: 6,7-dimethyl-8-ribityllumazine synthase (151 aa).

Residues F15, 47–49 (TFE), and 71–73 (AVI) contribute to the 5-amino-6-(D-ribitylamino)uracil site. Position 76–77 (76–77 (ET)) interacts with (2S)-2-hydroxy-3-oxobutyl phosphate. The Proton donor role is filled by H79. L104 lines the 5-amino-6-(D-ribitylamino)uracil pocket. A (2S)-2-hydroxy-3-oxobutyl phosphate-binding site is contributed by R119.

Belongs to the DMRL synthase family.

It carries out the reaction (2S)-2-hydroxy-3-oxobutyl phosphate + 5-amino-6-(D-ribitylamino)uracil = 6,7-dimethyl-8-(1-D-ribityl)lumazine + phosphate + 2 H2O + H(+). It participates in cofactor biosynthesis; riboflavin biosynthesis; riboflavin from 2-hydroxy-3-oxobutyl phosphate and 5-amino-6-(D-ribitylamino)uracil: step 1/2. In terms of biological role, catalyzes the formation of 6,7-dimethyl-8-ribityllumazine by condensation of 5-amino-6-(D-ribitylamino)uracil with 3,4-dihydroxy-2-butanone 4-phosphate. This is the penultimate step in the biosynthesis of riboflavin. The chain is 6,7-dimethyl-8-ribityllumazine synthase from Metallosphaera sedula (strain ATCC 51363 / DSM 5348 / JCM 9185 / NBRC 15509 / TH2).